Reading from the N-terminus, the 348-residue chain is D-alanine--D-alanine ligase (348 aa).

The ATP-grasp domain occupies 132 to 334 (KRVLESIGIP…YPDLIEELVT (203 aa)). Residue 162-217 (LARLTFPIFVKPANMGSSVGISKAQTKVELRKAIQLALTYDSRVLIEQGVVAREIE) coordinates ATP. The Mg(2+) site is built by Asp-288, Glu-301, and Asn-303.

It belongs to the D-alanine--D-alanine ligase family. The cofactor is Mg(2+). Requires Mn(2+) as cofactor.

Its subcellular location is the cytoplasm. It carries out the reaction 2 D-alanine + ATP = D-alanyl-D-alanine + ADP + phosphate + H(+). Its pathway is cell wall biogenesis; peptidoglycan biosynthesis. Functionally, cell wall formation. This Streptococcus pyogenes serotype M18 (strain MGAS8232) protein is D-alanine--D-alanine ligase.